We begin with the raw amino-acid sequence, 356 residues long: Histidinol-phosphate aminotransferase (356 aa).

An N6-(pyridoxal phosphate)lysine modification is found at Lys-214.

It belongs to the class-II pyridoxal-phosphate-dependent aminotransferase family. Histidinol-phosphate aminotransferase subfamily. As to quaternary structure, homodimer. Pyridoxal 5'-phosphate is required as a cofactor.

It catalyses the reaction L-histidinol phosphate + 2-oxoglutarate = 3-(imidazol-4-yl)-2-oxopropyl phosphate + L-glutamate. It functions in the pathway amino-acid biosynthesis; L-histidine biosynthesis; L-histidine from 5-phospho-alpha-D-ribose 1-diphosphate: step 7/9. The sequence is that of Histidinol-phosphate aminotransferase from Escherichia coli O8 (strain IAI1).